A 479-amino-acid polypeptide reads, in one-letter code: Altronate oxidoreductase (479 aa).

An NAD(+)-binding site is contributed by Ile18–Ala29.

This sequence belongs to the mannitol dehydrogenase family. UxaB subfamily.

It carries out the reaction D-altronate + NAD(+) = keto-D-tagaturonate + NADH + H(+). It functions in the pathway carbohydrate metabolism; pentose and glucuronate interconversion. The protein is Altronate oxidoreductase of Bacteroides thetaiotaomicron (strain ATCC 29148 / DSM 2079 / JCM 5827 / CCUG 10774 / NCTC 10582 / VPI-5482 / E50).